The following is a 206-amino-acid chain: Small ribosomal subunit protein uS4 (206 aa).

Residues 96–158 (GRLDNVVYRM…AKQQSRIKAA (63 aa)) enclose the S4 RNA-binding domain.

The protein belongs to the universal ribosomal protein uS4 family. Part of the 30S ribosomal subunit. Contacts protein S5. The interaction surface between S4 and S5 is involved in control of translational fidelity.

Its function is as follows. One of the primary rRNA binding proteins, it binds directly to 16S rRNA where it nucleates assembly of the body of the 30S subunit. Functionally, with S5 and S12 plays an important role in translational accuracy. The polypeptide is Small ribosomal subunit protein uS4 (Vibrio atlanticus (strain LGP32) (Vibrio splendidus (strain Mel32))).